The primary structure comprises 660 residues: DNA ligase (660 aa).

NAD(+)-binding positions include 32 to 36 (DEVYD), 81 to 82 (SM), and Glu112. Lys114 acts as the N6-AMP-lysine intermediate in catalysis. NAD(+) contacts are provided by Arg135, Glu169, Lys284, and Lys308. Cys402, Cys405, Cys418, and Cys423 together coordinate Zn(2+). Residues 578-660 (VENSPLAHKT…ELLKEAGIEA (83 aa)) form the BRCT domain.

Belongs to the NAD-dependent DNA ligase family. LigA subfamily. Mg(2+) is required as a cofactor. Mn(2+) serves as cofactor.

It catalyses the reaction NAD(+) + (deoxyribonucleotide)n-3'-hydroxyl + 5'-phospho-(deoxyribonucleotide)m = (deoxyribonucleotide)n+m + AMP + beta-nicotinamide D-nucleotide.. Its function is as follows. DNA ligase that catalyzes the formation of phosphodiester linkages between 5'-phosphoryl and 3'-hydroxyl groups in double-stranded DNA using NAD as a coenzyme and as the energy source for the reaction. It is essential for DNA replication and repair of damaged DNA. The protein is DNA ligase of Nitratiruptor sp. (strain SB155-2).